A 288-amino-acid chain; its full sequence is Orotidine 5'-phosphate decarboxylase (288 aa).

The active-site Proton donor is K99.

It belongs to the OMP decarboxylase family. Type 2 subfamily.

It carries out the reaction orotidine 5'-phosphate + H(+) = UMP + CO2. It participates in pyrimidine metabolism; UMP biosynthesis via de novo pathway; UMP from orotate: step 2/2. The chain is Orotidine 5'-phosphate decarboxylase (pyrF) from Myxococcus xanthus (strain DK1622).